The chain runs to 626 residues: MNGNRPNYISLIFAALVILSLFWLVRSFYFDTSAPSKMSFSDFIQMAYEEPTRIAEVVVRDDGILRVTTKRGEYYEIYAPWFMQDSETIKVLSEKGVRVTGEKGVSSSFWVNVIGNVIFIGFLLFMFFFMMRTISGRNNQAFTFTKSRAQMNRPGQARVTFKDVAGVDEAVEELKETVLFLKDPGRFSKIGARMPKGILLVGPPGTGKTLLARAVAGEANVPFFHISGSDFVELFVGVGAARVRDLFNQAKANAPCIVFIDEIDAVGRHRGAGLGGGHDEREQTLNQLLVEMDGFDVRQGIVVMAATNRPDILDPALLRPGRFDKKVVLDTPDVRGREEILKIHARNKPIAEDVDIRVLAQRTTGFVGADLENLVNEAALLAARNGRDKIKMEDFEEAIDRVIAGPARKSRVISPREKRIVAYHEVGHAIVSSLLPNADPVHRISIIPRGYRALGYTLQLPAEDRYLVTKQELLDQITGLLGGRAAEELIFQEVTTGAASDIERATELARRMVCQFGMSDKLGPLSWGKTEQEIFLGKELTRMRNYSEEVASEIDEEVRKIVTESYDRAKEILTKYHKQLDELVELLLEREVLEGEELRKILKTELGEEMVNHDKLRAAAGSEQDS.

Over 1–7 (MNGNRPN) the chain is Cytoplasmic. A helical transmembrane segment spans residues 8-28 (YISLIFAALVILSLFWLVRSF). Topologically, residues 29 to 108 (YFDTSAPSKM…VTGEKGVSSS (80 aa)) are periplasmic. The helical transmembrane segment at 109 to 129 (FWVNVIGNVIFIGFLLFMFFF) threads the bilayer. Residues 130-626 (MMRTISGRNN…RAAAGSEQDS (497 aa)) lie on the Cytoplasmic side of the membrane. 202–209 (GPPGTGKT) contacts ATP. H424 serves as a coordination point for Zn(2+). The active site involves E425. Positions 428 and 501 each coordinate Zn(2+).

It in the central section; belongs to the AAA ATPase family. In the C-terminal section; belongs to the peptidase M41 family. Homohexamer. The cofactor is Zn(2+).

The protein localises to the cell inner membrane. Its function is as follows. Acts as a processive, ATP-dependent zinc metallopeptidase for both cytoplasmic and membrane proteins. Plays a role in the quality control of integral membrane proteins. In Pseudothermotoga lettingae (strain ATCC BAA-301 / DSM 14385 / NBRC 107922 / TMO) (Thermotoga lettingae), this protein is ATP-dependent zinc metalloprotease FtsH.